We begin with the raw amino-acid sequence, 205 residues long: Golgi apparatus membrane protein TVP23 homolog B (205 aa).

At methionine 1 the chain carries N-acetylmethionine. Residues 1 to 21 are disordered; it reads MLQQDSNDDTEDVSLFDAEEE. The next 4 membrane-spanning stretches (helical) occupy residues 34 to 53, 54 to 72, 126 to 146, and 152 to 172; these read PVASFFHLFFRVSAIIVYLL, CELLSSSFITCMVTIILLL, IFWLGLIACPVLWVIFAFSAL, and KWLAVVIMGVVLQGANLYGYI.

Belongs to the TVP23 family.

The protein resides in the membrane. In Pongo abelii (Sumatran orangutan), this protein is Golgi apparatus membrane protein TVP23 homolog B (TVP23B).